Reading from the N-terminus, the 121-residue chain is MDAVTDTPVTEMPAPFVFTDAAADKVKELIEEEGNPELKLRVFVQGGGCSGFQYGFTFDEAINEDDTVMNKSGVQLLIDSMSYQYLVGAEIDYKDDINGAQFVIKNPNATTTCGCGSSFSV.

Residues Cys49, Cys113, and Cys115 each coordinate iron-sulfur cluster.

Belongs to the HesB/IscA family. Homodimer. Iron-sulfur cluster serves as cofactor.

Functionally, required for insertion of 4Fe-4S clusters. The sequence is that of Putative iron-sulfur cluster insertion protein ErpA from Paraburkholderia phymatum (strain DSM 17167 / CIP 108236 / LMG 21445 / STM815) (Burkholderia phymatum).